The chain runs to 483 residues: Altronate oxidoreductase (483 aa).

18-29 serves as a coordination point for NAD(+); that stretch reads IIQFGEGNFLRA.

This sequence belongs to the mannitol dehydrogenase family. UxaB subfamily.

It catalyses the reaction D-altronate + NAD(+) = keto-D-tagaturonate + NADH + H(+). Its pathway is carbohydrate metabolism; pentose and glucuronate interconversion. In Cronobacter sakazakii (strain ATCC BAA-894) (Enterobacter sakazakii), this protein is Altronate oxidoreductase.